Reading from the N-terminus, the 793-residue chain is Short transient receptor potential channel 1 (793 aa).

The segment at 1-30 is disordered; it reads MMAALYPSTDLSGASSSSLPSSPSSSSPNE. The Cytoplasmic segment spans residues 1–345; the sequence is MMAALYPSTD…FGQMSGYRRK (345 aa). Positions 15-28 are enriched in low complexity; the sequence is SSSSLPSSPSSSSP. ANK repeat units lie at residues 46–75, 83–109, 111–156, and 158–180; these read LNEK…SGDL, LGRN…YGCQ, ADAL…EYST, and MDVA…MLLK. Residues His189, Cys193, Cys195, and Cys198 each coordinate Zn(2+). The discontinuously helical intramembrane region spans 346–379; it reads PTCKKIMTVLTVGIFWPVLSLCYLIAPKSQFGRI. The Cytoplasmic portion of the chain corresponds to 380–386; it reads IHTPFMK. Residues 387–404 traverse the membrane as a helical segment; that stretch reads FIIHGASYFTFLLLLNLY. Over 405–422 the chain is Extracellular; the sequence is SLVYNEDKKNTMGPALER. Residues 423–439 traverse the membrane as a helical segment; it reads IDYLLILWIIGMIWSDI. The Cytoplasmic segment spans residues 440–455; sequence KRLWYEGLEDFLEESR. A helical membrane pass occupies residues 456–475; that stretch reads NQLSFVMNSLYLATFALKVV. At 476-496 the chain is on the extracellular side; the sequence is AHNKFHDFADRKDWDAFHPTL. A helical transmembrane segment spans residues 497-517; that stretch reads VAEGLFAFANVLSYLRLFFMY. Residues 518–536 are Cytoplasmic-facing; sequence TTSSILGPLQISMGQMLQD. Residues 537-558 traverse the membrane as a helical segment; it reads FGKFLGMFLLVLFSFTIGLTQL. The Extracellular portion of the chain corresponds to 559-623; sequence YDKGYTSKEQ…GEELQSFVGA (65 aa). A disulfide bond links Cys571 and Cys576. The helical transmembrane segment at 624-644 threads the bilayer; that stretch reads VIVGTYNVVVVIVLTKLLVAM. The Cytoplasmic portion of the chain corresponds to 645–793; that stretch reads LHKSFQLIAN…SKYAMFYPRN (149 aa).

Belongs to the transient receptor (TC 1.A.4) family. STrpC subfamily. TRPC1 sub-subfamily. In terms of assembly, heterotetramer with TRPC4 and/or TRPC5. Forms a heteromeric ion channel with TRPC4, with a 1:3 TRPC1:TRPC4 stoichiometry. Unlike other TRP channel proteins, does not form a homomeric channel. Interacts with TRPC4AP. Interacts with ITPR3. Interacts with MX1 and RNF24. Interacts with FKBP4. Interacts with PLSCR1. Interacts with PKD2L2. Forms a heterotetramer with PKD2 with a 2:2 stoichiometry; has distinct channel properties separate from PKD2 or TRPC1 homomers alone. Interacts with isoform 2 of TRPC3. Post-translationally, activation of PRKCA induces phosphorylation of TRPC1 and subsequent Ca2+ entry into cells. Seems to be ubiquitous.

It localises to the cell membrane. It carries out the reaction Ca(2+)(in) = Ca(2+)(out). The catalysed reaction is Na(+)(in) = Na(+)(out). The enzyme catalyses Li(+)(in) = Li(+)(out). It catalyses the reaction Cs(+)(in) = Cs(+)(out). With respect to regulation, may be operated by a phosphatidylinositol second messenger system activated by receptor tyrosine kinases or G-protein coupled receptors. Also activated by intracellular calcium store depletion. Inhibited by xanthine-based inhibitor Pico145. In terms of biological role, forms a receptor-activated non-selective calcium permeant cation channel. Forms a heteromeric ion channel with TRPC4 or TRPC5 that has reduced calcium permeability compared to the homomeric TRPC4 or TRPC5 channel. Also permeable to monovalent ions including sodium, lithium and cesium ions. Its function is as follows. Forms a receptor-activated non-selective calcium permeant cation channel. Also activated by intracellular calcium store depletion. This Homo sapiens (Human) protein is Short transient receptor potential channel 1 (TRPC1).